Here is an 875-residue protein sequence, read N- to C-terminus: Probable dipeptidyl-aminopeptidase B (875 aa).

Residues M1–K90 form a disordered region. Over M1 to K98 the chain is Cytoplasmic. The segment covering S19–S28 has biased composition (low complexity). Residues R33–S46 show a composition bias toward basic and acidic residues. The chain crosses the membrane as a helical; Signal-anchor for type II membrane protein span at residues V99 to L119. Topologically, residues T120–S875 are vacuolar. Residues N354 and N567 are each glycosylated (N-linked (GlcNAc...) asparagine). The interval V689–S715 is disordered. Residues R699–T708 are compositionally biased toward basic residues. Residue S726 is the Charge relay system of the active site. N-linked (GlcNAc...) asparagine glycosylation is present at N785. Active-site charge relay system residues include D803 and H836.

This sequence belongs to the peptidase S9B family.

Its subcellular location is the vacuole membrane. The catalysed reaction is Release of an N-terminal dipeptide, Xaa-Yaa-|-Zaa-, from a polypeptide, preferentially when Yaa is Pro, provided Zaa is neither Pro nor hydroxyproline.. In terms of biological role, type IV dipeptidyl-peptidase which removes N-terminal dipeptides sequentially from polypeptides having unsubstituted N-termini provided that the penultimate residue is proline. The sequence is that of Probable dipeptidyl-aminopeptidase B (DAPB) from Verticillium alfalfae (strain VaMs.102 / ATCC MYA-4576 / FGSC 10136) (Verticillium wilt of alfalfa).